The primary structure comprises 161 residues: Transcriptional regulator MraZ (161 aa).

SpoVT-AbrB domains follow at residues Lys7–Val69 and Leu98–Arg141.

This sequence belongs to the MraZ family. In terms of assembly, forms oligomers.

It is found in the cytoplasm. The protein localises to the nucleoid. This Chlorobium limicola (strain DSM 245 / NBRC 103803 / 6330) protein is Transcriptional regulator MraZ.